The chain runs to 356 residues: UDP-3-O-acylglucosamine N-acyltransferase (356 aa).

Residue H242 is the Proton acceptor of the active site.

It belongs to the transferase hexapeptide repeat family. LpxD subfamily. As to quaternary structure, homotrimer.

The catalysed reaction is a UDP-3-O-[(3R)-3-hydroxyacyl]-alpha-D-glucosamine + a (3R)-hydroxyacyl-[ACP] = a UDP-2-N,3-O-bis[(3R)-3-hydroxyacyl]-alpha-D-glucosamine + holo-[ACP] + H(+). Its pathway is bacterial outer membrane biogenesis; LPS lipid A biosynthesis. In terms of biological role, catalyzes the N-acylation of UDP-3-O-acylglucosamine using 3-hydroxyacyl-ACP as the acyl donor. Is involved in the biosynthesis of lipid A, a phosphorylated glycolipid that anchors the lipopolysaccharide to the outer membrane of the cell. The protein is UDP-3-O-acylglucosamine N-acyltransferase of Acinetobacter baumannii (strain ACICU).